The chain runs to 71 residues: Large ribosomal subunit protein bL31 (71 aa).

Cys-16, Cys-18, Cys-38, and Cys-41 together coordinate Zn(2+).

Belongs to the bacterial ribosomal protein bL31 family. Type A subfamily. Part of the 50S ribosomal subunit. It depends on Zn(2+) as a cofactor.

Binds the 23S rRNA. The sequence is that of Large ribosomal subunit protein bL31 from Chromobacterium violaceum (strain ATCC 12472 / DSM 30191 / JCM 1249 / CCUG 213 / NBRC 12614 / NCIMB 9131 / NCTC 9757 / MK).